The following is a 418-amino-acid chain: Secreted aspartic protease 5 (418 aa).

An N-terminal signal peptide occupies residues 1–18 (MFLKNILSVLAFALLIDA). The propeptide at 19–76 (APVKRSPGFVTLDFNVKRSLVDPDDPTVEAKRSPLFLEFTPSEFPVDETGRDGDVDKR) is activation peptide. One can recognise a Peptidase A1 domain in the interval 90 to 404 (YTADITVGSD…NLDDKKISMA (315 aa)). Residue aspartate 108 is part of the active site. Position 108–110 (108–110 (DTG)) interacts with pepstatin A. Cysteine 123 and cysteine 135 form a disulfide bridge. 161-162 (GD) contacts pepstatin A. Glutamate 268 contributes to the Zn(2+) binding site. The active site involves aspartate 294. Residue 294-298 (DSGTT) coordinates pepstatin A. Cysteines 332 and 370 form a disulfide.

This sequence belongs to the peptidase A1 family.

The protein localises to the secreted. It carries out the reaction Preferential cleavage at the carboxyl of hydrophobic amino acids, but fails to cleave 15-Leu-|-Tyr-16, 16-Tyr-|-Leu-17 and 24-Phe-|-Phe-25 of insulin B chain. Activates trypsinogen, and degrades keratin.. Its activity is regulated as follows. Inhibited by pepstatin A analogs. Functionally, secreted aspartic peptidases (SAPs) are a group of ten acidic hydrolases considered as key virulence factors. These enzymes supply the fungus with nutrient amino acids as well as are able to degrade the selected host's proteins involved in the immune defense. Moreover, acts toward human hemoglobin though limited proteolysis to generate a variety of antimicrobial hemocidins, enabling to compete with the other microorganisms of the same physiological niche using the microbicidal peptides generated from the host protein. The sequence is that of Secreted aspartic protease 5 from Candida albicans (strain SC5314 / ATCC MYA-2876) (Yeast).